A 165-amino-acid chain; its full sequence is Nucleotide-binding protein RoseRS_0530 (165 aa).

It belongs to the YajQ family.

In terms of biological role, nucleotide-binding protein. This is Nucleotide-binding protein RoseRS_0530 from Roseiflexus sp. (strain RS-1).